Here is a 767-residue protein sequence, read N- to C-terminus: Probable NADP-dependent malic enzyme (767 aa).

The segment at 1 to 430 (MDEMNKINYT…QLGSRLNPTA (430 aa)) is malic enzyme. The active-site Proton donor is Tyr-42. Lys-97 acts as the Proton acceptor in catalysis. 3 residues coordinate a divalent metal cation: Glu-139, Asp-140, and Asp-165. NADP(+) contacts are provided by residues 198–201 (AGAA), Asn-290, and Asn-322. The interval 431–767 (NYMNFLAEKI…FACVEAIKEV (337 aa)) is phosphate acetyltransferase.

The protein in the N-terminal section; belongs to the malic enzymes family. It in the C-terminal section; belongs to the phosphate acetyltransferase and butyryltransferase family. Mg(2+) serves as cofactor. Mn(2+) is required as a cofactor.

It catalyses the reaction (S)-malate + NADP(+) = pyruvate + CO2 + NADPH. It carries out the reaction oxaloacetate + H(+) = pyruvate + CO2. The polypeptide is Probable NADP-dependent malic enzyme (Rickettsia prowazekii (strain Madrid E)).